Reading from the N-terminus, the 481-residue chain is 3-isopropylmalate dehydratase large subunit (481 aa).

C357, C417, and C420 together coordinate [4Fe-4S] cluster.

This sequence belongs to the aconitase/IPM isomerase family. LeuC type 1 subfamily. Heterodimer of LeuC and LeuD. The cofactor is [4Fe-4S] cluster.

It carries out the reaction (2R,3S)-3-isopropylmalate = (2S)-2-isopropylmalate. It functions in the pathway amino-acid biosynthesis; L-leucine biosynthesis; L-leucine from 3-methyl-2-oxobutanoate: step 2/4. Functionally, catalyzes the isomerization between 2-isopropylmalate and 3-isopropylmalate, via the formation of 2-isopropylmaleate. The chain is 3-isopropylmalate dehydratase large subunit from Maricaulis maris (strain MCS10) (Caulobacter maris).